The following is a 184-amino-acid chain: Tumor necrosis factor alpha-induced protein 8-like protein 2 (184 aa).

A Phosphoserine; by MAP3K7 modification is found at serine 3.

The protein belongs to the TNFAIP8 family. TNFAIP8L2 subfamily. May interact with CASP8; however, such result is unclear since PubMed:19079267 could not reproduce the interaction with CASP8. Interacts with RAC1. Phosphorylated by TAK1/MAP3K7; this phosphorylation triggers association with BTRC and subsequent ubiquitination and degradation. Post-translationally, ubiquitinated in a BTRC-depdent manner; leading to degradation mediated through the proteasome pathway. Expressed in T-cells, B-cells, macrophages, neurons in the brain and brainstem, and stratified squamous epithelia of the esophagus, cervix and skin.

Its subcellular location is the cytoplasm. The protein resides in the nucleus. It is found in the lysosome. Acts as a negative regulator of innate and adaptive immunity by maintaining immune homeostasis. Plays a regulatory role in the Toll-like signaling pathway by determining the strength of LPS-induced signaling and gene expression. Inhibits TCR-mediated T-cell activation and negatively regulate T-cell function to prevent hyperresponsiveness. Also inhibits autolysosome formation via negatively modulating MTOR activation by interacting with RAC1 and promoting the disassociation of the RAC1-MTOR complex. Plays an essential role in NK-cell biology by acting as a checkpoint and displaying an expression pattern correlating with NK-cell maturation process and by negatively regulating NK-cell maturation and antitumor immunity. Mechanistically, suppresses IL-15-triggered mTOR activity in NK-cells. The protein is Tumor necrosis factor alpha-induced protein 8-like protein 2 (TNFAIP8L2) of Homo sapiens (Human).